The primary structure comprises 345 residues: Ribosomal RNA small subunit methyltransferase H (345 aa).

S-adenosyl-L-methionine-binding positions include 47–49, D65, F92, D113, and Q120; that span reads GGY. Residues 296–345 form a disordered region; that stretch reads EPGPDEVAGNPRARSAKLRAAERTNAPAHPGGDLMGLLPAPPPQRHGRRR.

Belongs to the methyltransferase superfamily. RsmH family.

The protein resides in the cytoplasm. The catalysed reaction is cytidine(1402) in 16S rRNA + S-adenosyl-L-methionine = N(4)-methylcytidine(1402) in 16S rRNA + S-adenosyl-L-homocysteine + H(+). Specifically methylates the N4 position of cytidine in position 1402 (C1402) of 16S rRNA. This chain is Ribosomal RNA small subunit methyltransferase H, found in Xanthobacter autotrophicus (strain ATCC BAA-1158 / Py2).